A 93-amino-acid polypeptide reads, in one-letter code: UPF0367 protein ssl1972 (93 aa).

This sequence belongs to the UPF0367 family.

The chain is UPF0367 protein ssl1972 from Synechocystis sp. (strain ATCC 27184 / PCC 6803 / Kazusa).